A 159-amino-acid chain; its full sequence is 3-hydroxyacyl-[acyl-carrier-protein] dehydratase FabZ (159 aa).

Residue His58 is part of the active site.

Belongs to the thioester dehydratase family. FabZ subfamily.

The protein localises to the cytoplasm. It catalyses the reaction a (3R)-hydroxyacyl-[ACP] = a (2E)-enoyl-[ACP] + H2O. Involved in unsaturated fatty acids biosynthesis. Catalyzes the dehydration of short chain beta-hydroxyacyl-ACPs and long chain saturated and unsaturated beta-hydroxyacyl-ACPs. In Helicobacter pylori (strain HPAG1), this protein is 3-hydroxyacyl-[acyl-carrier-protein] dehydratase FabZ.